We begin with the raw amino-acid sequence, 109 residues long: ATPase inhibitor mai-2, mitochondrial (109 aa).

Disordered stretches follow at residues 17–39 (RFST…SIRD) and 73–95 (QEVD…HQKR). The segment covering 21–35 (GGHGDGAGRGGGSGG) has biased composition (gly residues). Positions 45–109 (GKMEAAREDE…EAEERALGKE (65 aa)) form a coiled coil.

Belongs to the ATPase inhibitor family.

The protein localises to the mitochondrion. Thought to be a regulatory component of the ATP-synthesizing complex in the mitochondria. The sequence is that of ATPase inhibitor mai-2, mitochondrial from Caenorhabditis briggsae.